A 94-amino-acid polypeptide reads, in one-letter code: Integration host factor subunit beta (94 aa).

This sequence belongs to the bacterial histone-like protein family. Heterodimer of an alpha and a beta chain.

This protein is one of the two subunits of integration host factor, a specific DNA-binding protein that functions in genetic recombination as well as in transcriptional and translational control. The protein is Integration host factor subunit beta of Chelativorans sp. (strain BNC1).